Reading from the N-terminus, the 79-residue chain is Calcium/calmodulin-dependent protein kinase II inhibitor 2 (79 aa).

A disordered region spans residues 1 to 21; the sequence is MSEILPYSEDKMGRFGADPEG. The interval 43-69 is inhibitory domain; the sequence is KRPPKLGQIGRAKRVVIEDDRIDDVLK.

This sequence belongs to the CAMK2N family. Interacts with CAMK2A and CAMK2B in the presence of Ca(2+)/calmodulin or after autophosphorylation.

Its subcellular location is the nucleus. It is found in the cytoplasm. It localises to the cytosol. The protein localises to the synapse. Potent and specific cellular inhibitor of CaM-kinase II (CAMK2). Traps Ca(2+)/calmodulin on CAMK2. The sequence is that of Calcium/calmodulin-dependent protein kinase II inhibitor 2 (CAMK2N2) from Bos taurus (Bovine).